Here is a 517-residue protein sequence, read N- to C-terminus: Beta-glucosidase 17 (517 aa).

Residues M1–A23 form the signal peptide. A beta-D-glucoside is bound by residues Q54, H158, and N203–E204. The active-site Proton donor is the E204. A disulfide bridge links C223 with C230. N229 is a glycosylation site (N-linked (GlcNAc...) asparagine). Y346 serves as a coordination point for a beta-D-glucoside. N-linked (GlcNAc...) asparagine glycans are attached at residues N361 and N371. A beta-D-glucoside contacts are provided by residues E417, W466, E473–W474, and Y482. E417 acts as the Nucleophile in catalysis. Residue N510 is glycosylated (N-linked (GlcNAc...) asparagine).

The protein belongs to the glycosyl hydrolase 1 family.

The catalysed reaction is Hydrolysis of terminal, non-reducing beta-D-glucosyl residues with release of beta-D-glucose.. This chain is Beta-glucosidase 17, found in Arabidopsis thaliana (Mouse-ear cress).